Here is a 565-residue protein sequence, read N- to C-terminus: Estrogen receptor gamma (565 aa).

Residues 1–168 form a modulating region; sequence MAVASSPEKD…TSGGKTDLHY (168 aa). 2 NR C4-type zinc fingers span residues 169-189 and 205-229; these read CAVC…CEGC and CPAT…LRKC. A DNA-binding region (nuclear receptor) is located at residues 169 to 234; the sequence is CAVCHDYASG…RLRKCYEVGM (66 aa). A hinge region spans residues 235–285; sequence TKCGMRKERGNYRSPQMRRMTRLTSQGRTDSSSVLTGSAVVSLNAPQPSAL. In terms of domain architecture, NR LBD spans 286–516; that stretch reads TSEQLIERLM…DLLLEMLDAH (231 aa). Positions 522-565 are disordered; that stretch reads RLPRRSPEQEPEDQADAPAPPHSSGSGPSYTWTPSSSEGAGEPQ.

This sequence belongs to the nuclear hormone receptor family. NR3 subfamily. In terms of assembly, homodimer. In terms of tissue distribution, abundant in the ovary and testes, barely detectable in the brain and muscle and undetectable in the liver.

It is found in the nucleus. Functionally, the steroid hormones and their receptors are involved in the regulation of eukaryotic gene expression and affect cellular proliferation and differentiation in target tissues. The chain is Estrogen receptor gamma (esr3) from Micropogonias undulatus (Atlantic croaker).